An 883-amino-acid chain; its full sequence is Putative pentatricopeptide repeat-containing protein At1g13800 (883 aa).

PPR repeat units lie at residues 145–180 (LIRVSTALVKAYANLDMFDEAIDIFFRAYYSLGRAP), 181–215 (DIKALNFLISRMIASGRSDMVVGFFWEIERLGLDA), 216–251 (DAHTYVLVVQALWRNDDKEELEKLLSRLLISETRNP), 253–285 (VFYLNFIEGLCLNQMTDIAYFLLQPLRDANILV), 290–324 (LGIAYRKVVRGLCYEMRIEDAESVVLDMEKHGIDP), 325–359 (DVYVYSAIIEGHRKNMNIPKAVDVFNKMLKKRKRI), 360–394 (NCVIVSSILQCYCQMGNFSEAYDLFKEFRETNISL), 395–429 (DRVCYNVAFDALGKLGKVEEAIELFREMTGKGIAP), 430–464 (DVINYTTLIGGCCLQGKCSDAFDLMIEMDGTGKTP), 465–499 (DIVIYNVLAGGLATNGLAQEAFETLKMMENRGVKP), 500–534 (TYVTHNMVIEGLIDAGELDKAEAFYESLEHKSREN), 537–561 (SMVKGFCAAGCLDHAFERFIRLEFP), 563–598 (PKSVYFTLFTSLCAEKDYISKAQDLLDRMWKLGVEP), 599–633 (EKSMYGKLIGAWCRVNNVRKAREFFEILVTKKIVP), 634–668 (DLFTYTIMINTYCRLNEPKQAYALFEDMKRRDVKP), 697–731 (DVVYYTIMINRYCHLNDLKKVYALFKDMKRREIVP), 760–794 (DVFYYTVLIDWQCKIGDLGEAKRIFDQMIESGVDP), 795–829 (DAAPYTALIACCCKMGYLKEAKMIFDRMIESGVKP), and 830–864 (DVVPYTALIAGCCRNGFVLKAVKLVKEMLEKGIKP).

Belongs to the PPR family. P subfamily.

The sequence is that of Putative pentatricopeptide repeat-containing protein At1g13800 from Arabidopsis thaliana (Mouse-ear cress).